Consider the following 190-residue polypeptide: Segregation and condensation protein B (190 aa).

It belongs to the ScpB family. In terms of assembly, homodimer. Homodimerization may be required to stabilize the binding of ScpA to the Smc head domains. Component of a cohesin-like complex composed of ScpA, ScpB and the Smc homodimer, in which ScpA and ScpB bind to the head domain of Smc. The presence of the three proteins is required for the association of the complex with DNA.

It is found in the cytoplasm. Participates in chromosomal partition during cell division. May act via the formation of a condensin-like complex containing Smc and ScpA that pull DNA away from mid-cell into both cell halves. The sequence is that of Segregation and condensation protein B from Bacillus cereus (strain AH187).